The chain runs to 648 residues: SRSF protein kinase 1 (648 aa).

The segment at 1–57 (MERKVLALQARKKRTKAKKDKAQRKPETQHRGSAPHSESDIPEQEEEILGSDDDEQE) is disordered. The segment covering 10 to 22 (ARKKRTKAKKDKA) has biased composition (basic residues). Over residues 40 to 57 (DIPEQEEEILGSDDDEQE) the composition is skewed to acidic residues. Phosphoserine is present on Ser51. One can recognise a Protein kinase domain in the interval 80-646 (YHVIRKLGWG…AAECLRHPWL (567 aa)). Residues 86 to 94 (LGWGHFSTV) and Lys109 each bind ATP. Asp213 functions as the Proton acceptor in the catalytic mechanism. 2 disordered regions span residues 238-354 (WQRS…APEI) and 395-464 (PSFL…DSKG). The span at 265–276 (KNKKKKLKKKQK) shows a compositional bias: basic residues. Basic and acidic residues-rich tracts occupy residues 277–288 (RQAELLEKRMQE) and 304–317 (NKQEESESPVDRPL). Phosphoserine occurs at positions 309, 311, and 333. 2 stretches are compositionally biased toward polar residues: residues 333-343 (SNSIGQDQTLT) and 396-441 (SFLN…TQLE). Thr448 is modified (phosphothreonine). Position 450 is a phosphoserine (Ser450). Ser548 carries the post-translational modification Phosphoserine; by CK2.

Belongs to the protein kinase superfamily. CMGC Ser/Thr protein kinase family. In terms of assembly, monomer. Found in a multisubunit complex containing seven proteins, named toposome, which separates entangled circular chromatin DNA during chromosome segregation. Interacts with HHV-1 ICP27 protein. Interacts with DNAJC8 and AHSA1/AHA1 and this mediates formation of a complex with the Hsp70 /Hsp90 machinery. Binds to IGF2BP1, SYNCRIP, HNRNPA2B1 and HNRNPC. Interacts with SAFB/SAFB1 and SAFB2 which inhibits its activity. Mg(2+) serves as cofactor. In terms of tissue distribution, predominantly expressed in the testis but is also present at lower levels in heart, spleen, liver, brain, kidney, lung and skeletal muscle. Present in all germinal cells in the seminiferous tubules but not in mature spermatozoa.

The protein resides in the cytoplasm. It localises to the nucleus. The protein localises to the nucleoplasm. Its subcellular location is the nucleus matrix. It is found in the microsome. The protein resides in the nucleus speckle. It localises to the chromosome. It carries out the reaction L-seryl-[protein] + ATP = O-phospho-L-seryl-[protein] + ADP + H(+). The catalysed reaction is L-threonyl-[protein] + ATP = O-phospho-L-threonyl-[protein] + ADP + H(+). Activated by phosphorylation on Ser-51 and Ser-548. Functionally, serine/arginine-rich protein-specific kinase which specifically phosphorylates its substrates at serine residues located in regions rich in arginine/serine dipeptides, known as RS domains and is involved in the phosphorylation of SR splicing factors and the regulation of splicing. Plays a central role in the regulatory network for splicing, controlling the intranuclear distribution of splicing factors in interphase cells and the reorganization of nuclear speckles during mitosis. Can influence additional steps of mRNA maturation, as well as other cellular activities, such as chromatin reorganization in somatic and sperm cells and cell cycle progression. Phosphorylates SFRS2, ZRSR2, LBR and PRM1. Phosphorylates SRSF1 using a directional (C-terminal to N-terminal) and a dual-track mechanism incorporating both processive phosphorylation (in which the kinase stays attached to the substrate after each round of phosphorylation) and distributive phosphorylation steps (in which the kinase and substrate dissociate after each phosphorylation event). The RS domain of SRSF1 binds first to a docking groove in the large lobe of the kinase domain of SRPK1. This induces certain structural changes in SRPK1 and/or RRM2 domain of SRSF1, allowing RRM2 to bind the kinase and initiate phosphorylation. The cycles continue for several phosphorylation steps in a processive manner (steps 1-8) until the last few phosphorylation steps (approximately steps 9-12). During that time, a mechanical stress induces the unfolding of the beta-4 motif in RRM2, which then docks at the docking groove of SRPK1. This also signals RRM2 to begin to dissociate, which facilitates SRSF1 dissociation after phosphorylation is completed. Can mediate hepatitis B virus (HBV) core protein phosphorylation. It plays a negative role in the regulation of HBV replication through a mechanism not involving the phosphorylation of the core protein but by reducing the packaging efficiency of the pregenomic RNA (pgRNA) without affecting the formation of the viral core particles. Can induce splicing of exon 10 in MAPT/TAU. The chain is SRSF protein kinase 1 from Mus musculus (Mouse).